A 277-amino-acid polypeptide reads, in one-letter code: MELLHSGKVRDVYADGGDLILVASDRISVYDVVLPTPIPDKGKLLTALSLWWFDQLAELVPNHVLSATDVPPEFAGRAIRCRRLDMVPVECVARGYLTGGGFAEYQRTGAVSGVELPRGLVEAAALPEPVFTPSTKAPVGEHDQPITFGGVVDRVGAETAERLRRITLDVYRRGAELAAGRGILIADTKIELGWAADGTLTVGDELLTSDSSRFWPVESYQPGRAQFSYDKQYVRDWATRSGWDKQSPAPELPGEVVDATRARYVDVYEKLTGKRWG.

The protein belongs to the SAICAR synthetase family.

It catalyses the reaction 5-amino-1-(5-phospho-D-ribosyl)imidazole-4-carboxylate + L-aspartate + ATP = (2S)-2-[5-amino-1-(5-phospho-beta-D-ribosyl)imidazole-4-carboxamido]succinate + ADP + phosphate + 2 H(+). Its pathway is purine metabolism; IMP biosynthesis via de novo pathway; 5-amino-1-(5-phospho-D-ribosyl)imidazole-4-carboxamide from 5-amino-1-(5-phospho-D-ribosyl)imidazole-4-carboxylate: step 1/2. The sequence is that of Phosphoribosylaminoimidazole-succinocarboxamide synthase from Salinispora arenicola (strain CNS-205).